The primary structure comprises 507 residues: Blue light receptor lreB (507 aa).

The PAS domain occupies 170-234 (RVLNEMKDML…EEMNECITTT (65 aa)). A GATA-type zinc finger spans residues 463–488 (CTDCGTSDSPEWRKGPEGPKTLCNAC).

In terms of biological role, probable transcription factor involved in light regulation. Plays crucial roles in fungal growth and asexual development. Involved in conidiophore formation, sclerotium production, and conidial stress tolerance. Positively regulates the fungal pathogenicity towards maize and aflatoxin B1 production. This chain is Blue light receptor lreB, found in Aspergillus flavus.